A 393-amino-acid polypeptide reads, in one-letter code: Dual specificity mitogen-activated protein kinase kinase 1 (393 aa).

The disordered stretch occupies residues 1-27; it reads MPKKKPTPIQLNPAPDGSAVNGTSSAE. In terms of domain architecture, Protein kinase spans 68-361; the sequence is FEKISELGAG…LKQLMVHAFI (294 aa). Residues 74 to 82 and K97 contribute to the ATP site; that span reads LGAGNGGVV. The active-site Proton acceptor is the D190. Residues S218 and S222 each carry the phosphoserine; by RAF modification. Residues 270 to 307 form an RAF1-binding region; the sequence is ELELLFGCQVEGDAAETPPRPRTPGRPLSSYGMDSRPP. Phosphothreonine is present on T286. A Phosphothreonine; by MAPK1 modification is found at T292. Position 298 is a phosphoserine; by PAK (S298).

It belongs to the protein kinase superfamily. STE Ser/Thr protein kinase family. MAP kinase kinase subfamily. In terms of assembly, found in a complex with at least BRAF, HRAS, MAP2K1, MAPK3/ERK1 and RGS14. Forms a heterodimer with MAP2K2/MEK2. Forms heterodimers with KSR2 which further dimerize to form tetramers. Interacts with KSR1 or KSR2 and BRAF; the interaction with KSR1 or KSR2 mediates KSR1-BRAF or KSR2-BRAF dimerization. Interacts with ARBB2, LAMTOR3, MAPK1/ERK2 and RAF1. Interacts with MAPK1/ERK2. Interacts with MORG1. Interacts with PPARG. Interacts with VRK2. Interacts with SGK1. Interacts with BIRC6/bruce. Interacts with KAT7; the interaction promotes KAT7 phosphorylation. Interacts with RAF1 and NEK10; the interaction is required for ERK1/2-signaling pathway activation in response to UV irradiation. Interacts with TRAF3IP3. Interacts with MOS. In terms of processing, phosphorylation at Ser-218 and Ser-222 by MAP kinase kinase kinases (BRAF or MEKK1) positively regulates kinase activity. Also phosphorylated at Thr-292 by MAPK1/ERK2 and at Ser-298 by PAK. MAPK1/ERK2 phosphorylation of Thr-292 occurs in response to cellular adhesion and leads to inhibition of Ser-298 phosphorylation by PAK. Autophosphorylated at Ser-218 and Ser-222, autophosphosphorylation is promoted by NEK10 following UV irradiation.

Its subcellular location is the cytoplasm. The protein resides in the cytoskeleton. It localises to the microtubule organizing center. It is found in the centrosome. The protein localises to the spindle pole body. Its subcellular location is the nucleus. The protein resides in the membrane. The catalysed reaction is L-seryl-[protein] + ATP = O-phospho-L-seryl-[protein] + ADP + H(+). It catalyses the reaction L-threonyl-[protein] + ATP = O-phospho-L-threonyl-[protein] + ADP + H(+). The enzyme catalyses L-tyrosyl-[protein] + ATP = O-phospho-L-tyrosyl-[protein] + ADP + H(+). With respect to regulation, ras proteins such as HRAS mediate the activation of RAF proteins such as RAF1 or BRAF which in turn activate extracellular signal-regulated kinases (ERK) through MAPK (mitogen-activated protein kinases) and ERK kinases MAP2K1/MEK1 and MAP2K2/MEK2. Activation occurs through phosphorylation of Ser-218 and Ser-222. MAP2K1/MEK1 binds KSR1 or KSR2 releasing the inhibitory intramolecular interaction between KSR1 or KSR2 protein kinase and N-terminal domains. This allows KSR1 or KSR2 dimerization with BRAF leading to BRAF activation and phosphorylation of MAP2K1. MAP2K1/MEK1 is also the target of negative feed-back regulation by its substrate kinases, such as MAPK1/ERK2. These phosphorylate MAP2K1/MEK1 on Thr-292, thereby facilitating dephosphorylation of the activating residues Ser-218 and Ser-222. Inhibited by serine/threonine phosphatase 2A. Functionally, dual specificity protein kinase which acts as an essential component of the MAP kinase signal transduction pathway. Binding of extracellular ligands such as growth factors, cytokines and hormones to their cell-surface receptors activates RAS and this initiates RAF1 activation. RAF1 then further activates the dual-specificity protein kinases MAP2K1/MEK1 and MAP2K2/MEK2. Both MAP2K1/MEK1 and MAP2K2/MEK2 function specifically in the MAPK/ERK cascade, and catalyze the concomitant phosphorylation of a threonine and a tyrosine residue in a Thr-Glu-Tyr sequence located in the extracellular signal-regulated kinases MAPK3/ERK1 and MAPK1/ERK2, leading to their activation and further transduction of the signal within the MAPK/ERK cascade. Activates BRAF in a KSR1 or KSR2-dependent manner; by binding to KSR1 or KSR2 releases the inhibitory intramolecular interaction between KSR1 or KSR2 protein kinase and N-terminal domains which promotes KSR1 or KSR2-BRAF dimerization and BRAF activation. Depending on the cellular context, this pathway mediates diverse biological functions such as cell growth, adhesion, survival and differentiation, predominantly through the regulation of transcription, metabolism and cytoskeletal rearrangements. One target of the MAPK/ERK cascade is peroxisome proliferator-activated receptor gamma (PPARG), a nuclear receptor that promotes differentiation and apoptosis. MAP2K1/MEK1 has been shown to export PPARG from the nucleus. The MAPK/ERK cascade is also involved in the regulation of endosomal dynamics, including lysosome processing and endosome cycling through the perinuclear recycling compartment (PNRC), as well as in the fragmentation of the Golgi apparatus during mitosis. The polypeptide is Dual specificity mitogen-activated protein kinase kinase 1 (Rattus norvegicus (Rat)).